Reading from the N-terminus, the 469-residue chain is Dihydrolipoyl dehydrogenase (469 aa).

FAD-binding positions include 34–42 (EKQYWGGVC), K51, and G114. The cysteines at positions 42 and 47 are disulfide-linked. Residues 179–183 (GAGAI), E202, and 269–272 (SVGF) contribute to the NAD(+) site. Residues D312 and A320 each coordinate FAD. The Proton acceptor role is filled by H448.

This sequence belongs to the class-I pyridine nucleotide-disulfide oxidoreductase family. Homodimer. Part of an unusual ODH/PDH supercomplex, consisting of AceE (E1), AceF (E2), and Lpd (E3) together with OdhA (E1+E2). FAD serves as cofactor.

It localises to the cytoplasm. It carries out the reaction N(6)-[(R)-dihydrolipoyl]-L-lysyl-[protein] + NAD(+) = N(6)-[(R)-lipoyl]-L-lysyl-[protein] + NADH + H(+). Its pathway is carbohydrate metabolism; tricarboxylic acid cycle; succinyl-CoA from 2-oxoglutarate (dehydrogenase route): step 1/1. In terms of biological role, lipoamide dehydrogenase is an essential component of the pyruvate dehydrogenase (PDH) and 2-oxoglutarate dehydrogenase (ODH) complexes. Catalyzes the reoxidation of dihydrolipoyl groups which are covalently attached to the lipoate acyltransferase components (E2) of the complexes. Also catalyzes a reversible NADH:NAD(+) transhydrogenation, and is able to transfer electrons from NADH to various redox-active compounds and quinones. May be involved in quinone redox cycling in C.glutamicum. This Corynebacterium glutamicum (strain ATCC 13032 / DSM 20300 / JCM 1318 / BCRC 11384 / CCUG 27702 / LMG 3730 / NBRC 12168 / NCIMB 10025 / NRRL B-2784 / 534) protein is Dihydrolipoyl dehydrogenase (lpd).